Consider the following 515-residue polypeptide: Membrane-bound lytic murein transglycosylase F (515 aa).

A signal peptide spans Met1–Ala32. The segment at Asp33 to Gly269 is non-LT domain. The segment at Asp270–Asn515 is LT domain. Residue Glu314 is part of the active site. A disordered region spans residues Gln493–Asn515.

This sequence in the N-terminal section; belongs to the bacterial solute-binding protein 3 family. In the C-terminal section; belongs to the transglycosylase Slt family.

It is found in the cell outer membrane. It carries out the reaction Exolytic cleavage of the (1-&gt;4)-beta-glycosidic linkage between N-acetylmuramic acid (MurNAc) and N-acetylglucosamine (GlcNAc) residues in peptidoglycan, from either the reducing or the non-reducing ends of the peptidoglycan chains, with concomitant formation of a 1,6-anhydrobond in the MurNAc residue.. Its function is as follows. Murein-degrading enzyme that degrades murein glycan strands and insoluble, high-molecular weight murein sacculi, with the concomitant formation of a 1,6-anhydromuramoyl product. Lytic transglycosylases (LTs) play an integral role in the metabolism of the peptidoglycan (PG) sacculus. Their lytic action creates space within the PG sacculus to allow for its expansion as well as for the insertion of various structures such as secretion systems and flagella. This Citrobacter koseri (strain ATCC BAA-895 / CDC 4225-83 / SGSC4696) protein is Membrane-bound lytic murein transglycosylase F.